We begin with the raw amino-acid sequence, 161 residues long: Nucleotide-binding protein Glov_3198 (161 aa).

It belongs to the YajQ family.

Functionally, nucleotide-binding protein. The protein is Nucleotide-binding protein Glov_3198 of Trichlorobacter lovleyi (strain ATCC BAA-1151 / DSM 17278 / SZ) (Geobacter lovleyi).